Here is a 293-residue protein sequence, read N- to C-terminus: Acetyl-coenzyme A carboxylase carboxyl transferase subunit beta (293 aa).

Residues 29–293 form the CoA carboxyltransferase N-terminal domain; sequence LWVKCSECSQ…GVNELVEANI (265 aa). The Zn(2+) site is built by Cys-33, Cys-36, Cys-52, and Cys-55. The C4-type zinc-finger motif lies at 33–55; it reads CSECSQVAYRKDLISNFNVCSNC.

This sequence belongs to the AccD/PCCB family. Acetyl-CoA carboxylase is a heterohexamer composed of biotin carboxyl carrier protein (AccB), biotin carboxylase (AccC) and two subunits each of ACCase subunit alpha (AccA) and ACCase subunit beta (AccD). Zn(2+) serves as cofactor.

The protein resides in the cytoplasm. It catalyses the reaction N(6)-carboxybiotinyl-L-lysyl-[protein] + acetyl-CoA = N(6)-biotinyl-L-lysyl-[protein] + malonyl-CoA. It participates in lipid metabolism; malonyl-CoA biosynthesis; malonyl-CoA from acetyl-CoA: step 1/1. Its function is as follows. Component of the acetyl coenzyme A carboxylase (ACC) complex. Biotin carboxylase (BC) catalyzes the carboxylation of biotin on its carrier protein (BCCP) and then the CO(2) group is transferred by the transcarboxylase to acetyl-CoA to form malonyl-CoA. The polypeptide is Acetyl-coenzyme A carboxylase carboxyl transferase subunit beta (Prochlorococcus marinus (strain MIT 9215)).